The following is a 166-amino-acid chain: Large ribosomal subunit protein uL10 (166 aa).

The protein belongs to the universal ribosomal protein uL10 family. Part of the ribosomal stalk of the 50S ribosomal subunit. The N-terminus interacts with L11 and the large rRNA to form the base of the stalk. The C-terminus forms an elongated spine to which L12 dimers bind in a sequential fashion forming a multimeric L10(L12)X complex.

Forms part of the ribosomal stalk, playing a central role in the interaction of the ribosome with GTP-bound translation factors. The polypeptide is Large ribosomal subunit protein uL10 (Ureaplasma parvum serovar 3 (strain ATCC 27815 / 27 / NCTC 11736)).